Reading from the N-terminus, the 373-residue chain is MSSYYARRPLQSSGCSNSDSCWDGAPIEITESGPSVAGRLAALASRMTIKPLMTVGSYLSPLPLPLGFVDFACRVWRPGQGTVRTTINLPNATAQLVRAPGVRAADGAGRVVLYLHGGAFVMCGPNSHSRIVNALSGFAESPVLIVDYRLIPKHSLGMALDDCHDAYQWLRARGYRPEQIVLAGDSAGGYLALALAQRLQCDDEKPAAIVAISPLLQLAKGPKQDHPNIGTDAMFPARAFDALAAWVRAAAAKNMVDGRPEDLYEPLDHIESSLPPTLIHVSGSEVLLHDAQLGAGKLAAAGVCAEVRVWPGQAHLFQLATPLVPEATRSLRQIGQFIRDATADSSLSPVHRSRYVAGSPRAASRGAFGQSPI.

Positions 116-118 (HGG) match the Involved in the stabilization of the negatively charged intermediate by the formation of the oxyanion hole motif. Active-site residues include Ser186, Glu285, and His315.

The protein belongs to the 'GDXG' lipolytic enzyme family.

It carries out the reaction a carboxylic ester + H2O = an alcohol + a carboxylate + H(+). The enzyme catalyses a 1,2-diacyl-sn-glycero-3-phosphocholine + H2O = phosphocholine + a 1,2-diacyl-sn-glycerol + H(+). Its function is as follows. A short-chain esterase and phospholipase. The protein is Carboxylesterase/phospholipase LipF of Mycobacterium tuberculosis (strain CDC 1551 / Oshkosh).